A 471-amino-acid chain; its full sequence is Coronin-6 (471 aa).

WD repeat units follow at residues 79-119 (GHTG…PVRN), 129-169 (GHSK…VLLS), 173-212 (IHPD…VVAE), 216-259 (PHEG…EPVA), and 264-304 (DTSN…PFVH). The disordered stretch occupies residues 410–433 (ILDVRPPASPRRSQSASEAPLSQH). Positions 419–429 (PRRSQSASEAP) are enriched in low complexity. Residues 426–468 (SEAPLSQHTLETLLEEIKALRDRVQAQEERITALENMLCELVD) adopt a coiled-coil conformation.

This is Coronin-6 (Coro6) from Mus musculus (Mouse).